Reading from the N-terminus, the 309-residue chain is Glutaminase (309 aa).

Residues serine 64, asparagine 114, glutamate 160, asparagine 167, tyrosine 191, tyrosine 243, and valine 261 each coordinate substrate.

Belongs to the glutaminase family. As to quaternary structure, homotetramer.

The enzyme catalyses L-glutamine + H2O = L-glutamate + NH4(+). The sequence is that of Glutaminase from Rhizobium johnstonii (strain DSM 114642 / LMG 32736 / 3841) (Rhizobium leguminosarum bv. viciae).